Here is a 396-residue protein sequence, read N- to C-terminus: Apolipoprotein A-IV (396 aa).

The first 20 residues, 1 to 20, serve as a signal peptide directing secretion; the sequence is MFLKAVVLTLALVAVAGARA. 13 tandem repeats follow at residues 33-54, 60-81, 82-103, 115-136, 137-158, 159-180, 181-202, 203-224, 225-246, 247-268, 269-286, 287-308, and 309-330. The segment at 33–330 is 13 X 22 AA approximate tandem repeats; sequence DYFSQLSNNA…QMEQLRQKLG (298 aa). Positions 361–396 are disordered; sequence KESQDKTLSLPELEQQQEQQQEQQQEQVQMLAPLES. Over residues 374 to 389 the composition is skewed to low complexity; the sequence is EQQQEQQQEQQQEQVQ.

The protein belongs to the apolipoprotein A1/A4/E family. In terms of assembly, homodimer. Phosphorylation sites are present in the extracellular medium. In terms of tissue distribution, synthesized primarily in the intestine and secreted in plasma.

The protein localises to the secreted. May have a role in chylomicrons and VLDL secretion and catabolism. Required for efficient activation of lipoprotein lipase by ApoC-II; potent activator of LCAT. Apoa-IV is a major component of HDL and chylomicrons. The polypeptide is Apolipoprotein A-IV (Homo sapiens (Human)).